Consider the following 428-residue polypeptide: Histidinol dehydrogenase (428 aa).

Positions 126, 188, and 211 each coordinate NAD(+). Positions 234, 256, and 259 each coordinate substrate. 2 residues coordinate Zn(2+): Q256 and H259. Catalysis depends on proton acceptor residues E324 and H325. Positions 325, 358, 412, and 417 each coordinate substrate. D358 contacts Zn(2+). H417 is a Zn(2+) binding site.

This sequence belongs to the histidinol dehydrogenase family. The cofactor is Zn(2+).

It carries out the reaction L-histidinol + 2 NAD(+) + H2O = L-histidine + 2 NADH + 3 H(+). It functions in the pathway amino-acid biosynthesis; L-histidine biosynthesis; L-histidine from 5-phospho-alpha-D-ribose 1-diphosphate: step 9/9. In terms of biological role, catalyzes the sequential NAD-dependent oxidations of L-histidinol to L-histidinaldehyde and then to L-histidine. The polypeptide is Histidinol dehydrogenase (Chlorobaculum tepidum (strain ATCC 49652 / DSM 12025 / NBRC 103806 / TLS) (Chlorobium tepidum)).